The sequence spans 449 residues: Glutamyl-tRNA reductase (449 aa).

Residues 58 to 61 (TCNR), Ser-121, 126 to 128 (ETQ), and Gln-132 each bind substrate. Residue Cys-59 is the Nucleophile of the active site. 203 to 208 (GLGEMA) contributes to the NADP(+) binding site.

Belongs to the glutamyl-tRNA reductase family. As to quaternary structure, homodimer.

The catalysed reaction is (S)-4-amino-5-oxopentanoate + tRNA(Glu) + NADP(+) = L-glutamyl-tRNA(Glu) + NADPH + H(+). The protein operates within porphyrin-containing compound metabolism; protoporphyrin-IX biosynthesis; 5-aminolevulinate from L-glutamyl-tRNA(Glu): step 1/2. Catalyzes the NADPH-dependent reduction of glutamyl-tRNA(Glu) to glutamate 1-semialdehyde (GSA). The chain is Glutamyl-tRNA reductase from Helicobacter pylori (strain G27).